The sequence spans 424 residues: Histidine--tRNA ligase (424 aa).

This sequence belongs to the class-II aminoacyl-tRNA synthetase family. In terms of assembly, homodimer.

It is found in the cytoplasm. The catalysed reaction is tRNA(His) + L-histidine + ATP = L-histidyl-tRNA(His) + AMP + diphosphate + H(+). The polypeptide is Histidine--tRNA ligase (Staphylococcus epidermidis (strain ATCC 12228 / FDA PCI 1200)).